The primary structure comprises 226 residues: MKVVKICGIKTVEAASVAIDNGANLLGCILVPNRARTIDLEVAKQIARMVKRDRNPPPKFAGGTSTQHFEQVAQWIIENGPFLVGVFRNQPKEEVFRIAREVGLDFIQLHGSEDKLEFLGTEFGLIPRYVVPDELDLLEEQSLSLTQCVSLPLLDSEVGGEGKLLDWTFIEKLPTKAILAGGLTPENLPTFDNILGYDVSGGVETNGVKDSLKIIKFIQKGHAQSS.

This sequence belongs to the TrpF family.

The enzyme catalyses N-(5-phospho-beta-D-ribosyl)anthranilate = 1-(2-carboxyphenylamino)-1-deoxy-D-ribulose 5-phosphate. It functions in the pathway amino-acid biosynthesis; L-tryptophan biosynthesis; L-tryptophan from chorismate: step 3/5. The sequence is that of N-(5'-phosphoribosyl)anthranilate isomerase (TRP1) from Candida albicans (strain SC5314 / ATCC MYA-2876) (Yeast).